The primary structure comprises 215 residues: Probable phosphoglycerate mutase GpmB (215 aa).

Substrate-binding positions include 8–15, 21–22, Arg-58, Lys-60, 82–85, 104–105, and 151–152; these read RHGETQWN, QG, ELDM, RR, and GI. Catalysis depends on His-9, which acts as the Tele-phosphohistidine intermediate. The active-site Proton donor/acceptor is Glu-82.

This sequence belongs to the phosphoglycerate mutase family. GpmB subfamily.

It catalyses the reaction (2R)-2-phosphoglycerate = (2R)-3-phosphoglycerate. Its pathway is carbohydrate degradation; glycolysis; pyruvate from D-glyceraldehyde 3-phosphate: step 3/5. This Salmonella arizonae (strain ATCC BAA-731 / CDC346-86 / RSK2980) protein is Probable phosphoglycerate mutase GpmB.